The chain runs to 233 residues: Large ribosomal subunit protein uL3 (233 aa).

The segment at G146–G171 is disordered. N5-methylglutamine is present on Q168.

This sequence belongs to the universal ribosomal protein uL3 family. In terms of assembly, part of the 50S ribosomal subunit. Forms a cluster with proteins L14 and L19. Post-translationally, methylated by PrmB.

Its function is as follows. One of the primary rRNA binding proteins, it binds directly near the 3'-end of the 23S rRNA, where it nucleates assembly of the 50S subunit. This is Large ribosomal subunit protein uL3 from Bordetella bronchiseptica (strain ATCC BAA-588 / NCTC 13252 / RB50) (Alcaligenes bronchisepticus).